Reading from the N-terminus, the 576-residue chain is Plant intracellular Ras-group-related LRR protein 4 (576 aa).

The segment covering 130–151 (AAPAAATTTTSTAAAGSSSSSA) has biased composition (low complexity). The tract at residues 130 to 181 (AAPAAATTTTSTAAAGSSSSSAVGNAERHASSGTNGFTASRVAGTSTSTGRV) is disordered. Positions 160–180 (SSGTNGFTASRVAGTSTSTGR) are enriched in polar residues. 11 LRR repeats span residues 272-295 (LTGL…IGKL), 296-318 (FSLA…IGDL), 320-341 (SLIY…IGRL), 342-364 (LNLE…IGSL), 366-387 (RLKK…IGHC), 389-410 (SLVE…VGKL), 411-433 (EPLE…MASL), 434-456 (TKLK…FCFA), 458-481 (SLIK…IGNL), 482-503 (EMLE…SFGN), and 505-527 (KHLR…IALK). Residues 528–535 (GAQAVVQY) carry the GVYW; degenerate motif.

It belongs to the SHOC2 family. As to expression, widely expressed.

Its function is as follows. Leucine-rich repeat protein that likely mediates protein interactions, possibly in the context of signal transduction. The sequence is that of Plant intracellular Ras-group-related LRR protein 4 (IRL4) from Oryza sativa subsp. japonica (Rice).